A 253-amino-acid chain; its full sequence is Sulfate transporter CysZ (253 aa).

Helical transmembrane passes span 31 to 51 (FVIL…WWLF), 75 to 95 (LLWP…FSTI), 151 to 171 (IVLL…PVLW), and 222 to 242 (IPLL…AMWV).

Belongs to the CysZ family.

Its subcellular location is the cell inner membrane. Its function is as follows. High affinity, high specificity proton-dependent sulfate transporter, which mediates sulfate uptake. Provides the sulfur source for the cysteine synthesis pathway. This Escherichia coli O139:H28 (strain E24377A / ETEC) protein is Sulfate transporter CysZ.